Here is a 497-residue protein sequence, read N- to C-terminus: Delayed-rectifier potassium channel regulatory subunit KCNS1 (497 aa).

Residues 1–186 (MVSEFPGPGS…LTMENPGYSL (186 aa)) are Cytoplasmic-facing. A helical transmembrane segment spans residues 187-208 (PSKLFSCVSIGVVLASIAAMCI). Topologically, residues 209–239 (HSLPEYQAREAAAAVAAVAAGRSAEDVRDDP) are extracellular. Residues 240 to 262 (VLRRLEYFCIAWFSFEVSSRLLL) form a helical membrane-spanning segment. Topologically, residues 263-273 (APSTRNFFCHP) are cytoplasmic. The helical transmembrane segment at 274 to 291 (LNLIDIVSVLPFYLTLLA) threads the bilayer. Over 292 to 309 (GAALGDRRGASGEELGDL) the chain is Extracellular. A helical; Voltage-sensor membrane pass occupies residues 310-330 (GKVVQVFRLMRIFRVLKLARH). At 331-345 (STGLRSLGATLKHSY) the chain is on the cytoplasmic side. The chain crosses the membrane as a helical span at residues 346 to 367 (REVGILLLYLAVGVSVFSGVAY). Residues 368-379 (TAEEKNVGFDTI) lie on the Extracellular side of the membrane. An intramembrane region (helical) is located at residues 380 to 391 (PACWWWGTVSMT). Residues 392–397 (TVGYGD) carry the Selectivity filter motif. An intramembrane segment occupies 392 to 399 (TVGYGDVV). Topologically, residues 400–406 (PETVAGK) are extracellular. Residues 407–435 (LAASGCILGGILVVALPITIIFNKFSHFY) form a helical membrane-spanning segment. The Cytoplasmic portion of the chain corresponds to 436 to 497 (RRQKALEAAV…PSEPAKSHSY (62 aa)). A disordered region spans residues 464–497 (SDVSLETSRETSQEGRSTDLETQAPSEPAKSHSY). The segment covering 470–482 (TSRETSQEGRSTD) has biased composition (basic and acidic residues).

This sequence belongs to the potassium channel family. S (TC 1.A.1.2) subfamily. Kv9.1/KCNS1 sub-subfamily. In terms of assembly, heterotetramer with KCNB1. Heterotetramer with KCNB2. Does not form homomultimers. In terms of tissue distribution, highly expressed in brain, but not in the other tissues tested.

The protein resides in the cell membrane. Its function is as follows. Potassium channel regulatory subunit that modulate the delayed rectifier voltage-gated potassium channel activity of KCNB1 and KCNB2 by altering their kinetics, expression levels, and shifting the half-inactivation potential to more polarized values. While it does not form functional channels on its own, it can form functional heterotetrameric channels with KCNB1 and KCNB2. Each regulatory subunit has unique regulatory properties that can lead to extensive inhibition, significant changes in kinetics, and/or substantial shifts in the voltage dependencies of the inactivation process. This is Delayed-rectifier potassium channel regulatory subunit KCNS1 from Rattus norvegicus (Rat).